The following is a 193-amino-acid chain: Imidazoleglycerol-phosphate dehydratase (193 aa).

This sequence belongs to the imidazoleglycerol-phosphate dehydratase family.

Its subcellular location is the cytoplasm. It catalyses the reaction D-erythro-1-(imidazol-4-yl)glycerol 3-phosphate = 3-(imidazol-4-yl)-2-oxopropyl phosphate + H2O. The protein operates within amino-acid biosynthesis; L-histidine biosynthesis; L-histidine from 5-phospho-alpha-D-ribose 1-diphosphate: step 6/9. The protein is Imidazoleglycerol-phosphate dehydratase of Staphylococcus carnosus (strain TM300).